A 1401-amino-acid polypeptide reads, in one-letter code: Condensin complex subunit 1 (1401 aa).

An interactions with SMC2 and SMC4 region spans residues Met-1–Ser-603. 2 positions are modified to phosphoserine: Ser-20 and Ser-585. Positions Ser-576–Cys-596 are enriched in polar residues. 3 disordered regions span residues Ser-576–Asn-611, Arg-956–Glu-978, and Leu-1303–Ser-1401. The segment covering Arg-956–Thr-971 has biased composition (basic and acidic residues). The span at Ala-1308–Asp-1336 shows a compositional bias: polar residues. A phosphoserine mark is found at Ser-1310, Ser-1315, and Ser-1330. Thr-1331 is subject to Phosphothreonine. Ser-1333 carries the phosphoserine modification. Position 1339 is a phosphothreonine (Thr-1339). A Bipartite nuclear localization signal motif is present at residues Pro-1342–Lys-1362. Positions Thr-1345–Lys-1362 are enriched in basic residues. Ser-1366, Ser-1367, Ser-1370, Ser-1371, and Ser-1376 each carry phosphoserine. Positions Glu-1369 to Asp-1382 are enriched in acidic residues. Residues Thr-1384 and Thr-1389 each carry the phosphothreonine; by CDK1 modification. Ser-1395 is modified (phosphoserine).

Belongs to the CND1 (condensin subunit 1) family. As to quaternary structure, component of the condensin complex, which contains the SMC2 and SMC4 heterodimer, and three non SMC subunits that probably regulate the complex: NCAPH/BRRN1, NCAPD2/CAPD2 and NCAPG. Interacts with histones H1 and H3. Post-translationally, phosphorylated by CDK1. Its phosphorylation, as well as that of NCAPH and NCAPG subunits, activates the condensin complex and is required for chromosome condensation.

It localises to the nucleus. The protein localises to the cytoplasm. Its subcellular location is the chromosome. In terms of biological role, regulatory subunit of the condensin complex, a complex required for conversion of interphase chromatin into mitotic-like condense chromosomes. The condensin complex probably introduces positive supercoils into relaxed DNA in the presence of type I topoisomerases and converts nicked DNA into positive knotted forms in the presence of type II topoisomerases. May target the condensin complex to DNA via its C-terminal domain. May promote the resolution of double-strand DNA catenanes (intertwines) between sister chromatids. Condensin-mediated compaction likely increases tension in catenated sister chromatids, providing directionality for type II topoisomerase-mediated strand exchanges toward chromatid decatenation. Required for decatenation of non-centromeric ultrafine DNA bridges during anaphase. Early in neurogenesis, may play an essential role to ensure accurate mitotic chromosome condensation in neuron stem cells, ultimately affecting neuron pool and cortex size. This Homo sapiens (Human) protein is Condensin complex subunit 1.